The following is a 361-amino-acid chain: Phospho-N-acetylmuramoyl-pentapeptide-transferase (361 aa).

The next 10 membrane-spanning stretches (helical) occupy residues 21–41 (YITF…FVIG), 72–92 (TPTM…LLWV), 94–114 (LANV…LIGF), 135–155 (LAWT…VTPH), 169–189 (LLVN…VGAS), 200–220 (GLAI…AYLS), 240–260 (LAVF…FNAP), 263–283 (MVFM…AVSV), 289–309 (LVLA…MVQV), and 338–358 (TVVI…LSTL).

It belongs to the glycosyltransferase 4 family. MraY subfamily. Mg(2+) serves as cofactor.

It is found in the cell inner membrane. The enzyme catalyses UDP-N-acetyl-alpha-D-muramoyl-L-alanyl-gamma-D-glutamyl-meso-2,6-diaminopimeloyl-D-alanyl-D-alanine + di-trans,octa-cis-undecaprenyl phosphate = di-trans,octa-cis-undecaprenyl diphospho-N-acetyl-alpha-D-muramoyl-L-alanyl-D-glutamyl-meso-2,6-diaminopimeloyl-D-alanyl-D-alanine + UMP. The protein operates within cell wall biogenesis; peptidoglycan biosynthesis. Functionally, catalyzes the initial step of the lipid cycle reactions in the biosynthesis of the cell wall peptidoglycan: transfers peptidoglycan precursor phospho-MurNAc-pentapeptide from UDP-MurNAc-pentapeptide onto the lipid carrier undecaprenyl phosphate, yielding undecaprenyl-pyrophosphoryl-MurNAc-pentapeptide, known as lipid I. This is Phospho-N-acetylmuramoyl-pentapeptide-transferase from Rhodospirillum centenum (strain ATCC 51521 / SW).